The sequence spans 416 residues: Putative UV-damage repair protein UvrX (416 aa).

In terms of domain architecture, UmuC spans isoleucine 12–glycine 196. Aspartate 16 and aspartate 115 together coordinate Mg(2+). Glutamate 116 is a catalytic residue.

The protein belongs to the DNA polymerase type-Y family. Requires Mg(2+) as cofactor.

In Bacillus subtilis (strain 168), this protein is Putative UV-damage repair protein UvrX (uvrX).